A 274-amino-acid chain; its full sequence is UPF0758 protein RHECIAT_CH0001935 (274 aa).

The segment at 1–57 is disordered; sequence MAKRPAATSSNDELPFATEEPVADERSFFGGRPQNPTAPNARAALPASLSGPEHYHG. In terms of domain architecture, MPN spans 152–274; it reads VLSSWSSVIQ…HVSLKGLKLI (123 aa). Residues His223, His225, and Asp236 each contribute to the Zn(2+) site. Residues 223 to 236 carry the JAMM motif motif; sequence HNHPSGDPTPSRAD.

It belongs to the UPF0758 family.

The polypeptide is UPF0758 protein RHECIAT_CH0001935 (Rhizobium etli (strain CIAT 652)).